A 276-amino-acid polypeptide reads, in one-letter code: Exosome complex component RRP43 (276 aa).

Position 2 is an N-acetylalanine (Ala-2).

The protein belongs to the RNase PH family. As to quaternary structure, component of the RNA exosome core complex (Exo-9), composed of EXOSC1, EXOSC2, EXOSC3, EXOSC4, EXOSC5, EXOSC6, EXOSC7, EXOSC8 and EXOSC9; within the complex interacts with EXOSC5 and EXOSC6. The catalytically inactive RNA exosome core complex (Exo-9) associates with the catalytic subunit EXOSC10/RRP6. Exo-9 may associate with DIS3 to form the nucleolar exosome complex, or DIS3L to form the cytoplasmic exosome complex. Exo-9 is formed by a hexameric base ring consisting of the heterodimers EXOSC4-EXOSC9, EXOSC5-EXOSC8 and EXOSC6-EXOSC7, and a cap ring consisting of EXOSC1, EXOSC2 and EXOSC3. The RNA exosome complex associates with cofactors C1D/RRP47, MPHOSPH6/MPP6 and MTREX/MTR4. Binds outer membrane protein opap from Neisseria gonorrhoeae.

Its subcellular location is the cytoplasm. The protein resides in the nucleus. It localises to the nucleolus. Its function is as follows. Non-catalytic component of the RNA exosome complex which has 3'-&gt;5' exoribonuclease activity and participates in a multitude of cellular RNA processing and degradation events. In the nucleus, the RNA exosome complex is involved in proper maturation of stable RNA species such as rRNA, snRNA and snoRNA, in the elimination of RNA processing by-products and non-coding 'pervasive' transcripts, such as antisense RNA species and promoter-upstream transcripts (PROMPTs), and of mRNAs with processing defects, thereby limiting or excluding their export to the cytoplasm. The RNA exosome may be involved in Ig class switch recombination (CSR) and/or Ig variable region somatic hypermutation (SHM) by targeting AICDA deamination activity to transcribed dsDNA substrates. In the cytoplasm, the RNA exosome complex is involved in general mRNA turnover and specifically degrades inherently unstable mRNAs containing AU-rich elements (AREs) within their 3' untranslated regions, and in RNA surveillance pathways, preventing translation of aberrant mRNAs. It seems to be involved in degradation of histone mRNA. The catalytic inactive RNA exosome core complex of 9 subunits (Exo-9) is proposed to play a pivotal role in the binding and presentation of RNA for ribonucleolysis, and to serve as a scaffold for the association with catalytic subunits and accessory proteins or complexes. EXOSC8 binds to ARE-containing RNAs. In Homo sapiens (Human), this protein is Exosome complex component RRP43 (EXOSC8).